An 88-amino-acid chain; its full sequence is Small ribosomal subunit protein uS17 (88 aa).

This sequence belongs to the universal ribosomal protein uS17 family. As to quaternary structure, part of the 30S ribosomal subunit.

Functionally, one of the primary rRNA binding proteins, it binds specifically to the 5'-end of 16S ribosomal RNA. The polypeptide is Small ribosomal subunit protein uS17 (Marinobacter nauticus (strain ATCC 700491 / DSM 11845 / VT8) (Marinobacter aquaeolei)).